Reading from the N-terminus, the 105-residue chain is Nucleoid-associated protein Sca_0120 (105 aa).

Residues 1–36 (MRGGGNMQQMMKQMQKMQKKMAEEQEKLKDEKVEGS) are disordered. Over residues 7-16 (MQQMMKQMQK) the composition is skewed to low complexity. Basic and acidic residues predominate over residues 20 to 34 (KMAEEQEKLKDEKVE).

Belongs to the YbaB/EbfC family. As to quaternary structure, homodimer.

Its subcellular location is the cytoplasm. The protein resides in the nucleoid. In terms of biological role, binds to DNA and alters its conformation. May be involved in regulation of gene expression, nucleoid organization and DNA protection. This is Nucleoid-associated protein Sca_0120 from Staphylococcus carnosus (strain TM300).